Here is a 646-residue protein sequence, read N- to C-terminus: Kinesin-like protein klp-20 (646 aa).

The region spanning Lys6–Ile331 is the Kinesin motor domain. Residue Gly91 to Thr98 coordinates ATP. The stretch at Lys342–Ala552 forms a coiled coil. The interaction with klp-11 stretch occupies residues Leu525 to Asn550. The interval Thr623–Thr646 is disordered. Residues Arg629–Ser638 are compositionally biased toward basic residues.

This sequence belongs to the TRAFAC class myosin-kinesin ATPase superfamily. Kinesin family. Kinesin II subfamily. In terms of assembly, component of the kinesin II motor complex, a heterotrimeric complex composed of kap-1, klp-11 and klp-20. Interacts (via C-terminus) with klp-11 (via C-terminus) to form a heterodimer. Furthermore, within the heterodimer, the C-termini of klp-20 and klp-11 interact to form a coiled coil (stalk) or tail domain, and this is necessary for association with kap-1, and kinesin II motor complex activity upon IFT cargo binding. Prior to cargo binding, the klp-11/klp-20 heterodimer is autoinhibited by the tail domain of the heterodimer, which folds onto the kinesin motor domain. Cargo binding to the heterodimer relieves the autoinhibition, and allows for an extended conformation of the tail domain, and function of the heterodimer.

The protein resides in the cell projection. It is found in the cilium. Its subcellular location is the cytoplasm. The protein localises to the cytoskeleton. Its function is as follows. Component of the kinesin II motor complex (composed of kap-1 and the heterodimeric motor proteins klp-11 and klp-20) which is required for intraflagellar transport (IFT). Heterodimerizes with klp-11 to form a 'processive' molecular motor upon IFT cargo binding, which, within the kinesin II motor complex, binds to and moves along microtubules in a unidirectional manner (without dissociation of the heterodimer), and in turn, is responsible for the IFT of cargo. Specifically, the kinesin II motor complex, together with the kinesin motor protein osm-3 moves along microtubules and is required for anterograde IFT along the middle segment of the sensory neuron cilia. In particular, the kinesin II motor complex delivers specific ciliary cargo proteins such as che-3 which are related to motility to ciliary tips. This is likely mediated by IFT complexes A and B. This is Kinesin-like protein klp-20 from Caenorhabditis elegans.